The following is a 233-amino-acid chain: Biosynthetic peptidoglycan transglycosylase (233 aa).

The helical transmembrane segment at L4–L24 threads the bilayer.

This sequence belongs to the glycosyltransferase 51 family.

It localises to the cell inner membrane. The enzyme catalyses [GlcNAc-(1-&gt;4)-Mur2Ac(oyl-L-Ala-gamma-D-Glu-L-Lys-D-Ala-D-Ala)](n)-di-trans,octa-cis-undecaprenyl diphosphate + beta-D-GlcNAc-(1-&gt;4)-Mur2Ac(oyl-L-Ala-gamma-D-Glu-L-Lys-D-Ala-D-Ala)-di-trans,octa-cis-undecaprenyl diphosphate = [GlcNAc-(1-&gt;4)-Mur2Ac(oyl-L-Ala-gamma-D-Glu-L-Lys-D-Ala-D-Ala)](n+1)-di-trans,octa-cis-undecaprenyl diphosphate + di-trans,octa-cis-undecaprenyl diphosphate + H(+). Its pathway is cell wall biogenesis; peptidoglycan biosynthesis. In terms of biological role, peptidoglycan polymerase that catalyzes glycan chain elongation from lipid-linked precursors. The chain is Biosynthetic peptidoglycan transglycosylase from Cupriavidus metallidurans (strain ATCC 43123 / DSM 2839 / NBRC 102507 / CH34) (Ralstonia metallidurans).